We begin with the raw amino-acid sequence, 465 residues long: MKFNVKMLSVTLGLFTSHAFAHTVYENARIYTVNDRQPTASVLVVDQGKIVYVGGNDGAKPFKATATELVDLEGKTVLPGFIESHAHPATVAVMEAGDFVYVDGARTLSQILSQLKAYLVAHPKANYLLAQGFNVASLGLPQGALPTAADLDTVSESVPIVVYDSGMHAGWANSAALNVAHVDANTPDPIPGKHYFERDNKGNPTGFMHESAMHNVVDAQQFNAVENVAEKLQPILKTYHSLGFTAITDVGDTFSTTVAAIARLNEQGKLKVYYQRGYFYDAAKSTEQNIASLKGLREKYHQGNLSINLYKLFMDGTIEMDSGAMYQPYPNGNVVEPFLSQKQINDNVAAALKAGFSVHVHAIGDKAQQSILDAFAANKKINPQLARVIAHNQVFEPQGVQKFAAMKDNLFLQTTPNWAVMYEKDETKTKIGQDAYHHQFLLGQAAREGVAVTSALTILRIPLMR.

The signal sequence occupies residues 1 to 21; sequence MKFNVKMLSVTLGLFTSHAFA.

Belongs to the metallo-dependent hydrolases superfamily.

In terms of biological role, involved in the control of extracellular enzymes production. Stimulates PEL, PEH, CEL, and PRT production. The sequence is that of Exoenzymes regulatory protein AepA (aepA) from Pectobacterium carotovorum subsp. carotovorum (Erwinia carotovora subsp. carotovora).